A 124-amino-acid chain; its full sequence is ATP synthase epsilon chain (124 aa).

The protein belongs to the ATPase epsilon chain family. As to quaternary structure, F-type ATPases have 2 components, CF(1) - the catalytic core - and CF(0) - the membrane proton channel. CF(1) has five subunits: alpha(3), beta(3), gamma(1), delta(1), epsilon(1). CF(0) has three main subunits: a, b and c.

It localises to the cell membrane. Functionally, produces ATP from ADP in the presence of a proton gradient across the membrane. The chain is ATP synthase epsilon chain from Corynebacterium glutamicum (strain ATCC 13032 / DSM 20300 / JCM 1318 / BCRC 11384 / CCUG 27702 / LMG 3730 / NBRC 12168 / NCIMB 10025 / NRRL B-2784 / 534).